We begin with the raw amino-acid sequence, 593 residues long: SPI-1 type 3 secretion system translocon protein SctE (593 aa).

Coiled coils occupy residues 151-208 (DTAK…ATDA) and 287-314 (EGRQAEMEKKSAEFQEETRKAEETNRIM). 2 helical membrane-spanning segments follow: residues 330–350 (VVAAVFTGGASLALAAVGLAV) and 409–429 (IVGAIVAAIAMVAVIVVVAVV).

It belongs to the SctE/SipB/YopB family. The core secretion machinery of the T3SS is composed of approximately 20 different proteins, including cytoplasmic components, a base, an export apparatus and a needle. This subunit is involved in the formation of a pore, called the translocon, in host membrane.

It is found in the secreted. It localises to the host membrane. In terms of biological role, component of the type III secretion system 1 (SPI-1 T3SS), also called injectisome, which is used to inject bacterial effector proteins into eukaryotic host cells. SipB/SctE1 and SipC/SctB are inserted into the host membrane where they form a pore and allow the translocation of effector proteins into the cytosol of target cells. The sequence is that of SPI-1 type 3 secretion system translocon protein SctE from Salmonella dublin.